We begin with the raw amino-acid sequence, 400 residues long: Queuine tRNA-ribosyltransferase (400 aa).

Asp-93 (proton acceptor) is an active-site residue. Residues 93–97, Asp-166, and Gly-247 each bind substrate; that span reads DSGGF. An RNA binding region spans residues 277–283; the sequence is GIGDVDD. Catalysis depends on Asp-296, which acts as the Nucleophile. The RNA binding; important for wobble base 34 recognition stretch occupies residues 301-305; the sequence is TRLGR. 4 residues coordinate Zn(2+): Cys-338, Cys-340, Cys-343, and His-369.

This sequence belongs to the queuine tRNA-ribosyltransferase family. In terms of assembly, homodimer. Within each dimer, one monomer is responsible for RNA recognition and catalysis, while the other monomer binds to the replacement base PreQ1. Zn(2+) is required as a cofactor.

The catalysed reaction is 7-aminomethyl-7-carbaguanine + guanosine(34) in tRNA = 7-aminomethyl-7-carbaguanosine(34) in tRNA + guanine. It participates in tRNA modification; tRNA-queuosine biosynthesis. In terms of biological role, catalyzes the base-exchange of a guanine (G) residue with the queuine precursor 7-aminomethyl-7-deazaguanine (PreQ1) at position 34 (anticodon wobble position) in tRNAs with GU(N) anticodons (tRNA-Asp, -Asn, -His and -Tyr). Catalysis occurs through a double-displacement mechanism. The nucleophile active site attacks the C1' of nucleotide 34 to detach the guanine base from the RNA, forming a covalent enzyme-RNA intermediate. The proton acceptor active site deprotonates the incoming PreQ1, allowing a nucleophilic attack on the C1' of the ribose to form the product. After dissociation, two additional enzymatic reactions on the tRNA convert PreQ1 to queuine (Q), resulting in the hypermodified nucleoside queuosine (7-(((4,5-cis-dihydroxy-2-cyclopenten-1-yl)amino)methyl)-7-deazaguanosine). The sequence is that of Queuine tRNA-ribosyltransferase from Roseiflexus sp. (strain RS-1).